A 102-amino-acid polypeptide reads, in one-letter code: Large ribosomal subunit protein uL24 (102 aa).

The protein belongs to the universal ribosomal protein uL24 family. In terms of assembly, part of the 50S ribosomal subunit.

Functionally, one of two assembly initiator proteins, it binds directly to the 5'-end of the 23S rRNA, where it nucleates assembly of the 50S subunit. Its function is as follows. One of the proteins that surrounds the polypeptide exit tunnel on the outside of the subunit. In Finegoldia magna (strain ATCC 29328 / DSM 20472 / WAL 2508) (Peptostreptococcus magnus), this protein is Large ribosomal subunit protein uL24.